The sequence spans 27 residues: Cupiennin-3b (27 aa).

Glu27 is subject to Glutamic acid 1-amide.

Expressed by the venom gland.

Its subcellular location is the secreted. This is Cupiennin-3b from Cupiennius salei (American wandering spider).